A 170-amino-acid chain; its full sequence is Adenine phosphoribosyltransferase (170 aa).

Belongs to the purine/pyrimidine phosphoribosyltransferase family. As to quaternary structure, homodimer.

Its subcellular location is the cytoplasm. It catalyses the reaction AMP + diphosphate = 5-phospho-alpha-D-ribose 1-diphosphate + adenine. Its pathway is purine metabolism; AMP biosynthesis via salvage pathway; AMP from adenine: step 1/1. Catalyzes a salvage reaction resulting in the formation of AMP, that is energically less costly than de novo synthesis. The protein is Adenine phosphoribosyltransferase of Fusobacterium nucleatum subsp. nucleatum (strain ATCC 25586 / DSM 15643 / BCRC 10681 / CIP 101130 / JCM 8532 / KCTC 2640 / LMG 13131 / VPI 4355).